Here is a 27-residue protein sequence, read N- to C-terminus: Delta-conotoxin TsVIA (27 aa).

Disulfide bonds link cysteine 1–cysteine 17, cysteine 8–cysteine 21, and cysteine 16–cysteine 25.

The protein belongs to the conotoxin O1 superfamily. Expressed by the venom duct.

It localises to the secreted. Delta-conotoxins bind to site 6 of voltage-gated sodium channels (Nav) and inhibit the inactivation process. This toxin inhibits tetrodotoxin(TTX)-sensitive sodium channels. A test on mouse Nav1.6/SCN8A confirms this sensitivity. This chain is Delta-conotoxin TsVIA, found in Conus tessulatus (Tessellate cone).